We begin with the raw amino-acid sequence, 430 residues long: Adenylosuccinate synthetase (430 aa).

Residues 12 to 18 (GDEGKGK) and 40 to 42 (GHT) contribute to the GTP site. Asp13 functions as the Proton acceptor in the catalytic mechanism. 2 residues coordinate Mg(2+): Asp13 and Gly40. Residues 13–16 (DEGK), 38–41 (NAGH), Thr128, Arg142, Gln223, Thr238, and Arg302 each bind IMP. His41 acts as the Proton donor in catalysis. 298–304 (TTTGRPR) is a binding site for substrate. Residues Arg304, 330–332 (SID), and 412–414 (SVG) contribute to the GTP site.

Belongs to the adenylosuccinate synthetase family. Homodimer. Mg(2+) is required as a cofactor.

It localises to the cytoplasm. The enzyme catalyses IMP + L-aspartate + GTP = N(6)-(1,2-dicarboxyethyl)-AMP + GDP + phosphate + 2 H(+). It participates in purine metabolism; AMP biosynthesis via de novo pathway; AMP from IMP: step 1/2. Its function is as follows. Plays an important role in the de novo pathway of purine nucleotide biosynthesis. Catalyzes the first committed step in the biosynthesis of AMP from IMP. The protein is Adenylosuccinate synthetase of Streptococcus pyogenes serotype M2 (strain MGAS10270).